The following is a 202-amino-acid chain: Peptide methionine sulfoxide reductase A1 (202 aa).

The segment at 1 to 20 is disordered; the sequence is MNILNKLGIGSSRQTNMDPS. Serine 189 bears the Phosphoserine mark.

Belongs to the MsrA Met sulfoxide reductase family.

The protein localises to the cytoplasm. Its subcellular location is the cytosol. It carries out the reaction L-methionyl-[protein] + [thioredoxin]-disulfide + H2O = L-methionyl-(S)-S-oxide-[protein] + [thioredoxin]-dithiol. The enzyme catalyses [thioredoxin]-disulfide + L-methionine + H2O = L-methionine (S)-S-oxide + [thioredoxin]-dithiol. Its function is as follows. Catalyzes the reduction of methionine sulfoxide (MetSO) to methionine in proteins. Plays a protective role against oxidative stress by restoring activity to proteins that have been inactivated by methionine oxidation. MSRA family specifically reduces the MetSO S-enantiomer. In Arabidopsis thaliana (Mouse-ear cress), this protein is Peptide methionine sulfoxide reductase A1 (MSRA1).